Here is a 102-residue protein sequence, read N- to C-terminus: RNA-binding protein Hfq (102 aa).

The Sm domain maps to 9-68; that stretch reads DPFLNALRRERVPVSIYLVNGIKLQGQIESFDQFVILLKNTVSQMVYKHAISTVVPSRPV. The interval 63–102 is disordered; that stretch reads VPSRPVSHHSNNAGGSTSSNYHHGSSAQNTSAQQDSEENE. The segment covering 70 to 96 has biased composition (polar residues); sequence HHSNNAGGSTSSNYHHGSSAQNTSAQQ.

This sequence belongs to the Hfq family. In terms of assembly, homohexamer.

Functionally, RNA chaperone that binds small regulatory RNA (sRNAs) and mRNAs to facilitate mRNA translational regulation in response to envelope stress, environmental stress and changes in metabolite concentrations. Also binds with high specificity to tRNAs. The sequence is that of RNA-binding protein Hfq from Escherichia coli O17:K52:H18 (strain UMN026 / ExPEC).